The sequence spans 142 residues: Large ribosomal subunit protein uL13 (142 aa).

Belongs to the universal ribosomal protein uL13 family. In terms of assembly, part of the 50S ribosomal subunit.

Functionally, this protein is one of the early assembly proteins of the 50S ribosomal subunit, although it is not seen to bind rRNA by itself. It is important during the early stages of 50S assembly. This Pseudomonas putida (strain ATCC 700007 / DSM 6899 / JCM 31910 / BCRC 17059 / LMG 24140 / F1) protein is Large ribosomal subunit protein uL13.